The chain runs to 183 residues: Beta-defensin 129 (183 aa).

Positions Met1–Thr19 are cleaved as a signal peptide. 3 cysteine pairs are disulfide-bonded: Cys27–Cys53, Cys34–Cys48, and Cys38–Cys54. The segment at Thr141–Gln183 is disordered. Over residues Ser159–Leu170 the composition is skewed to pro residues.

Belongs to the beta-defensin family.

It is found in the secreted. In terms of biological role, has antibacterial activity. The chain is Beta-defensin 129 (DEFB129) from Pan troglodytes (Chimpanzee).